The following is a 185-amino-acid chain: ATP synthase subunit b 2 (185 aa).

Residues 1 to 24 (MADSHGNAKGATAHTEAGGGHKAP) are disordered. A helical transmembrane segment spans residues 34 to 56 (ASQLVSLTIAFVALYLISSRLAL).

The protein belongs to the ATPase B chain family. In terms of assembly, F-type ATPases have 2 components, F(1) - the catalytic core - and F(0) - the membrane proton channel. F(1) has five subunits: alpha(3), beta(3), gamma(1), delta(1), epsilon(1). F(0) has three main subunits: a(1), b(2) and c(10-14). The alpha and beta chains form an alternating ring which encloses part of the gamma chain. F(1) is attached to F(0) by a central stalk formed by the gamma and epsilon chains, while a peripheral stalk is formed by the delta and b chains.

It localises to the cell inner membrane. Functionally, f(1)F(0) ATP synthase produces ATP from ADP in the presence of a proton or sodium gradient. F-type ATPases consist of two structural domains, F(1) containing the extramembraneous catalytic core and F(0) containing the membrane proton channel, linked together by a central stalk and a peripheral stalk. During catalysis, ATP synthesis in the catalytic domain of F(1) is coupled via a rotary mechanism of the central stalk subunits to proton translocation. Its function is as follows. Component of the F(0) channel, it forms part of the peripheral stalk, linking F(1) to F(0). The b'-subunit is a diverged and duplicated form of b found in plants and photosynthetic bacteria. This chain is ATP synthase subunit b 2 (atpF2), found in Nitrobacter hamburgensis (strain DSM 10229 / NCIMB 13809 / X14).